A 306-amino-acid chain; its full sequence is Phosphoribosylaminoimidazole-succinocarboxamide synthase (306 aa).

Position 2 is an N-acetylserine (Ser-2).

This sequence belongs to the SAICAR synthetase family. Monomer.

It catalyses the reaction 5-amino-1-(5-phospho-D-ribosyl)imidazole-4-carboxylate + L-aspartate + ATP = (2S)-2-[5-amino-1-(5-phospho-beta-D-ribosyl)imidazole-4-carboxamido]succinate + ADP + phosphate + 2 H(+). It functions in the pathway purine metabolism; IMP biosynthesis via de novo pathway; 5-amino-1-(5-phospho-D-ribosyl)imidazole-4-carboxamide from 5-amino-1-(5-phospho-D-ribosyl)imidazole-4-carboxylate: step 1/2. Functionally, catalyzes the reaction of 4-carboxy-5-aminoimidazole ribotide (CAIR) and aspartic acid with the formation of N-succinyl-5-amino-imidazole-4-carboxamide ribotide (SAICAR) in the purine biosynthesis pathway. In Saccharomyces cerevisiae (strain ATCC 204508 / S288c) (Baker's yeast), this protein is Phosphoribosylaminoimidazole-succinocarboxamide synthase (ADE1).